Consider the following 6684-residue polypeptide: Replicase polyprotein 1ab (6684 aa).

A CoV Nsp1 globular domain is found at 2–108; that stretch reads SSKQFKILVN…DFDLKIARTG (107 aa). A CoV Nsp2 N-terminal domain is found at 111–349; that stretch reads AIYVDQYMCG…KSLVACSVKR (239 aa). Zn(2+) is bound by residues Cys240, Cys242, Cys259, and Cys260. Residues 240–260 form a C4 region; that stretch reads CPCGSESSGVGDWTGFKTACC. A CoV Nsp2 middle domain is found at 378 to 773; the sequence is NVGLLFKKTP…CNAARNDIEI (396 aa). Residues 768–879 form the CoV Nsp2 C-terminal domain; that stretch reads RNDIEIGGIP…VQRMYNKMGG (112 aa). Residues 882 to 983 form the Ubiquitin-like 1 domain; it reads KTVSFSEEVD…DGIMISQYDI (102 aa). The interval 989–1032 is disordered; sequence EKSEVSASSEEEEVESVEEDPENEIVEASEGAEGTSSQEEVETV. The span at 997-1015 shows a compositional bias: acidic residues; it reads SEEEEVESVEEDPENEIVE. A Peptidase C16 1 domain is found at 1055–1299; that stretch reads PWAAAVDVQE…FKVEKVEQQP (245 aa). The active-site For PL1-PRO activity is the Cys1093. The segment at 1164–1195 adopts a C4-type 1; degenerate zinc-finger fold; the sequence is CGCGEKEIVLERAVFKLTPLKESFNYGVCGDC. Catalysis depends on for PL1-PRO activity residues His1244 and Asp1257. One can recognise a Macro domain in the interval 1318–1489; sequence NDDLILPFYK…TIENFFSCSI (172 aa). Residues 1486 to 1542 enclose the Ubiquitin-like 2 domain; sequence SCSIPVNVTEDNVNHERVSVSFDKTYGEQLKGTVVIKDKDVTNQLPSAFDVGQKVIK. The Peptidase C16 2 domain occupies 1550–1803; sequence AHYGFRDAAA…KVAASPKIVQ (254 aa). Cys1588 serves as the catalytic For PL2-PRO activity. Residues Cys1667, Cys1670, Cys1694, and His1696 each coordinate Zn(2+). The C4-type 2; atypical zinc finger occupies 1667-1696; the sequence is CDKCAKVEKFVGPVVAAPLAIHGTDETCVH. Active-site for PL2-PRO activity residues include His1741 and Asp1754. A helical membrane pass occupies residues 1896 to 1916; that stretch reads LVLLLIAIYNFFYLFVSIPVV. Residues 1896-2053 are HD1; it reads LVLLLIAIYN…LALKHIVFAC (158 aa). Residues 1905–1970 enclose the 3Ecto domain; that stretch reads NFFYLFVSIP…LQVTWDFKSD (66 aa). Intrachain disulfides connect Cys1921–Cys1948 and Cys1939–Cys1945. 2 helical membrane-spanning segments follow: residues 1995–2015 and 2033–2053; these read CFLM…FGYV and FVIV…VFAC. The tract at residues 2044 to 2134 is Y1; sequence LALKHIVFAC…SVKQTVYATD (91 aa). The CoV Nsp3 Y domain maps to 2044–2384; that stretch reads LALKHIVFAC…PYERFTESVS (341 aa). 8 residues coordinate Zn(2+): His2048, Cys2053, Cys2058, Cys2061, Cys2094, His2097, Cys2101, and Cys2104. The interval 2048–2061 is ZF1; the sequence is HIVFACSNPSCKTC. Positions 2094-2104 are ZF2; sequence CKKHNFYCKNC. The interval 2135–2224 is Y2; that stretch reads RSHQEVTKVE…IVNSDLLEDL (90 aa). The interval 2135 to 2384 is coV-Y; that stretch reads RSHQEVTKVE…PYERFTESVS (250 aa). The interval 2225–2281 is Y3; it reads SVDFKGALFNAKKNVIKNSFNVDVSECKNLDECYRACNLNVSFSTFEMAVNNAHRFG. Positions 2282–2384 are Y4; the sequence is ILITDRSFNN…PYERFTESVS (103 aa). The next 8 membrane-spanning stretches (helical) occupy residues 2401-2421, 2467-2487, 2497-2517, 2538-2558, 2666-2686, 2695-2715, 2721-2741, and 2746-2766; these read IVIL…YSVA, YGFI…VFDL, PAYV…AFGV, CVFN…VYCA, GAML…YGVL, CTFL…SYFV, FMII…YPGI, and FIIA…ILVF. The HD2 stretch occupies residues 2401–2766; sequence IVILVFVFIF…YVITAYILVF (366 aa). A Nsp4C domain is found at 2783–2878; the sequence is LFEGDKFVGN…PTVSVNSTLQ (96 aa). A Peptidase C30 domain is found at 2879 to 3180; the sequence is SGLRKMAQPS…IRQMYGVNLQ (302 aa). Catalysis depends on for 3CL-PRO activity residues His2919 and Cys3022. 8 helical membrane-spanning segments follow: residues 3187 to 3207, 3217 to 3237, 3242 to 3262, 3280 to 3300, 3313 to 3333, 3347 to 3367, 3371 to 3391, and 3394 to 3414; these read FFYP…EFFM, TFVS…VSGI, LFFM…NLFW, MFLP…IVFV, WFSL…IFGT, FVNM…VVIA, IAYY…FGFM, and ISIV…ILYW. Positions 3187 to 3414 are HD3; sequence FFYPIMTAMT…FCCYYGILYW (228 aa). The RdRp Nsp7 cofactor domain maps to 3475–3557; sequence SKLTEMKCTN…SYFENTTILQ (83 aa). The RdRp Nsp8 cofactor domain occupies 3558-3752; that stretch reads SVASAYAALP…ITCERTTKLQ (195 aa). The Nsp9 ssRNA-binding domain occupies 3753-3863; it reads NNEIMPGKLK…GYIGATVRLQ (111 aa). Residues 3864 to 4004 enclose the ExoN/MTase coactivator domain; the sequence is AGKPTEHPSN…TSMQSFTVDQ (141 aa). 8 residues coordinate Zn(2+): Cys3937, Cys3940, His3946, Cys3953, Cys3979, Cys3982, Cys3990, and Cys3992. 2 zinc fingers span residues 3937–3953 and 3979–3992; these read CIYC…DGLC and CVVC…GCMC. The NiRAN domain maps to 4006–4255; the sequence is YLNRVRGSSA…ESENFVKSDI (250 aa). A Nsp12 Interface domain is found at 4261–4359; sequence KQYDLLAYDF…WNLDVKLDTM (99 aa). The Zn(2+) site is built by His4290, Cys4296, Cys4301, Cys4305, and Cys4482. Positions 4360-4927 constitute a Nsp12 RNA-dependent RNA polymerase domain; the sequence is KLSMTDLLRF…SLYEKSTVLQ (568 aa). Positions 4362–4576 are rdRp Fingers N-ter; the sequence is SMTDLLRFVT…HQKHLKSIAA (215 aa). Residues 4577-4615 are rdRp Palm N-ter; the sequence is TRNATVVIGSTKFYGGWDNMLKNLMRDVDNGCLMGWDYP. Residues 4607–4769 form the RdRp catalytic domain; that stretch reads GCLMGWDYPK…CYNKDYADLG (163 aa). Residues 4616–4674 form a rdRp Fingers C-ter region; the sequence is KCDRALPNMIRMASAMILGSKHVGCCTHNDRFYRLSNELAQVLTEVVHCTGGFYFKPGG. Zn(2+) contacts are provided by His4637, Cys4640, and Cys4641. Residues 4675 to 4810 are rdRp Palm C-ter; sequence TTSGDGTTAY…SVGPHEFCSQ (136 aa). Catalysis depends on residues Ser4754, Asp4755, and Asp4756. The segment at 4811-4927 is rdRp Thumb; sequence HTLQIVGPDG…SLYEKSTVLQ (117 aa). A CV ZBD domain is found at 4928 to 5040; the sequence is AAGMCVVCGS…EDFNKLAVSD (113 aa). Cys4932, Cys4935, Cys4943, Cys4946, Cys4953, Cys4956, His4960, His4966, Cys4977, Cys4982, Cys4999, and His5002 together coordinate Zn(2+). One can recognise a (+)RNA virus helicase ATP-binding domain in the interval 5175-5366; sequence NTISKLYPVF…MCTLGPDVFL (192 aa). Residue 5210 to 5217 participates in ATP binding; it reads GPPGSGKS. The region spanning 5367-5536 is the (+)RNA virus helicase C-terminal domain; sequence HKCYRCPAEI…AKPETCGLFK (170 aa). In terms of domain architecture, ExoN spans 5598–5812; that stretch reads LFCTRDFAMR…RCLAIHDCFV (215 aa). Catalysis depends on residues Asp5616, Glu5618, and Glu5717. The Zn(2+) site is built by Cys5733, Cys5735, Cys5751, His5754, His5782, Cys5786, and His5789. Catalysis depends on residues His5793 and Asp5798. Cys5804 is a Zn(2+) binding site. The region spanning 5821-6042 is the N7-MTase domain; the sequence is YPFIDNEEKI…MLWHGFVNSK (222 aa). Position 5856–5862 (5856–5862) interacts with S-adenosyl-L-methionine; the sequence is DVGNPKG. Residues 5933–5947 are gpppA-binding; it reads CNGGALYVNNHAFHT. Cys5971, Cys5988, Cys5999, and His6002 together coordinate Zn(2+). In terms of domain architecture, Nsp15 N-terminal oligomerization spans 6046–6106; sequence SLENVAFNVV…NVAFELYAKR (61 aa). Positions 6107-6224 constitute an AV-Nsp11N/CoV-Nsp15M domain; that stretch reads KLGLTPPLTI…IYVRKNGEYV (118 aa). Residues 6241-6381 form the NendoU domain; sequence KPRSTMEEDF…ENSHIKTFYP (141 aa). Catalysis depends on residues His6271, His6286, Lys6327, Lys6429, Asp6513, Lys6553, and Glu6586. Positions 6385 to 6681 constitute a Nidovirus-type SAM-dependent 2'-O-MTase domain; it reads SAEWNPGYSM…KLLNFGNHFV (297 aa).

It belongs to the coronaviruses polyprotein 1ab family. As to quaternary structure, 3CL-PRO exists as monomer and homodimer. Eight copies of nsp7 and eight copies of nsp8 assemble to form a heterohexadecamer. Nsp9 is a dimer. Nsp10 forms a dodecamer. Mn(2+) is required as a cofactor. Post-translationally, specific enzymatic cleavages in vivo by its own proteases yield mature proteins. 3CL-PRO is autocatalytically processed.

The protein resides in the host membrane. The protein localises to the host cytoplasm. It is found in the host perinuclear region. Its subcellular location is the host endoplasmic reticulum-Golgi intermediate compartment. The enzyme catalyses Thiol-dependent hydrolysis of ester, thioester, amide, peptide and isopeptide bonds formed by the C-terminal Gly of ubiquitin (a 76-residue protein attached to proteins as an intracellular targeting signal).. The catalysed reaction is RNA(n) + a ribonucleoside 5'-triphosphate = RNA(n+1) + diphosphate. It catalyses the reaction ATP + H2O = ADP + phosphate + H(+). It carries out the reaction a 5'-end diphospho-ribonucleoside in mRNA + GTP + H(+) = a 5'-end (5'-triphosphoguanosine)-ribonucleoside in mRNA + diphosphate. The enzyme catalyses a 5'-end (N(7)-methyl 5'-triphosphoguanosine)-ribonucleoside in mRNA + S-adenosyl-L-methionine = a 5'-end (N(7)-methyl 5'-triphosphoguanosine)-(2'-O-methyl-ribonucleoside) in mRNA + S-adenosyl-L-homocysteine + H(+). The catalysed reaction is uridylyl-uridylyl-ribonucleotide-RNA = a 3'-end uridylyl-2',3'-cyclophospho-uridine-RNA + a 5'-end dephospho-ribonucleoside-RNA. Functionally, the replicase polyprotein of coronaviruses is a multifunctional protein: it contains the activities necessary for the transcription of negative stranded RNA, leader RNA, subgenomic mRNAs and progeny virion RNA as well as proteinases responsible for the cleavage of the polyprotein into functional products. In terms of biological role, non-structural protein 1 inhibits host translation. By suppressing host gene expression, nsp1 facilitates efficient viral gene expression in infected cells and evasion from host immune response. Its function is as follows. The papain-like proteinase 1 (PLP1) and papain-like proteinase 2 (PLP2) are responsible for the cleavages located at the N-terminus of the replicase polyprotein. In addition, PLP2 possesses a deubiquitinating/deISGylating activity and processes both 'Lys-48'- and 'Lys-63'-linked polyubiquitin chains from cellular substrates. PLP2 also antagonizes innate immune induction of type I interferon by blocking the nuclear translocation of host IRF-3. Responsible for the majority of cleavages as it cleaves the C-terminus of replicase polyprotein at 11 sites. Recognizes substrates containing the core sequence [ILMVF]-Q-|-[SAGC]. Inhibited by the substrate-analog Cbz-Val-Asn-Ser-Thr-Leu-Gln-CMK. Functionally, the helicase which contains a zinc finger structure displays RNA and DNA duplex-unwinding activities with 5' to 3' polarity. ATPase activity is strongly stimulated by poly(U), poly(dT), poly(C), poly(dA), but not by poly(G). In terms of biological role, the exoribonuclease acts on both ssRNA and dsRNA in a 3' to 5' direction. Its function is as follows. Nsp7-nsp8 hexadecamer may possibly confer processivity to the polymerase, maybe by binding to dsRNA or by producing primers utilized by the latter. Forms a primer, NSP9-pU, which is utilized by the polymerase for the initiation of RNA chains. Interacts with ribosome signal recognition particle RNA (SRP). Together with NSP8, suppress protein integration into the cell membrane, thereby disrupting host immune defenses. Functionally, RNA-directed RNA polymerase that catalyzes the transcription of viral genomic and subgenomic RNAs. Acts in complex with nsp7 and nsp8 to transcribe both the minus and positive strands of genomic RNA. The kinase-like NiRAN domain of NSP12 attaches one or more nucleotides to the amino terminus of NSP9, forming a covalent RNA-protein intermediate that serves as transcription/replication primer. Subgenomic RNAs (sgRNAs) are formed by discontinuous transcription: The polymerase has the ability to pause at transcription-regulating sequences (TRS) and jump to the leader TRS, resulting in a major deletion. This creates a series of subgenomic RNAs that are replicated, transcribed and translated. In addition, Nsp12 is a subunit of the viral RNA capping enzyme that catalyzes the RNA guanylyltransferase reaction for genomic and sub-genomic RNAs. Subsequently, the NiRAN domain transfers RNA to GDP, and forms the core cap structure GpppA-RNA. In terms of biological role, plays a role in viral transcription/replication and prevents the simultaneous activation of host cell dsRNA sensors, such as MDA5/IFIH1, OAS, and PKR. Acts by degrading the 5'-polyuridines generated during replication of the poly(A) region of viral genomic and subgenomic RNAs. Catalyzes a two-step reaction in which a 2'3'-cyclic phosphate (2'3'-cP) is first generated by 2'-O transesterification, which is then hydrolyzed to a 3'-phosphate (3'-P). If not degraded, poly(U) RNA would hybridize with poly(A) RNA tails and activate host dsRNA sensors. The chain is Replicase polyprotein 1ab (rep) from Sus scrofa (Pig).